Here is a 378-residue protein sequence, read N- to C-terminus: Ribosomal RNA large subunit methyltransferase G (378 aa).

This sequence belongs to the methyltransferase superfamily. RlmG family.

It is found in the cytoplasm. It carries out the reaction guanosine(1835) in 23S rRNA + S-adenosyl-L-methionine = N(2)-methylguanosine(1835) in 23S rRNA + S-adenosyl-L-homocysteine + H(+). Functionally, specifically methylates the guanine in position 1835 (m2G1835) of 23S rRNA. This chain is Ribosomal RNA large subunit methyltransferase G, found in Salmonella dublin (strain CT_02021853).